Reading from the N-terminus, the 468-residue chain is ATP synthase subunit beta (468 aa).

155–162 (GGAGVGKT) provides a ligand contact to ATP.

Belongs to the ATPase alpha/beta chains family. As to quaternary structure, F-type ATPases have 2 components, CF(1) - the catalytic core - and CF(0) - the membrane proton channel. CF(1) has five subunits: alpha(3), beta(3), gamma(1), delta(1), epsilon(1). CF(0) has three main subunits: a(1), b(2) and c(9-12). The alpha and beta chains form an alternating ring which encloses part of the gamma chain. CF(1) is attached to CF(0) by a central stalk formed by the gamma and epsilon chains, while a peripheral stalk is formed by the delta and b chains.

The protein localises to the cell membrane. The catalysed reaction is ATP + H2O + 4 H(+)(in) = ADP + phosphate + 5 H(+)(out). Functionally, produces ATP from ADP in the presence of a proton gradient across the membrane. The catalytic sites are hosted primarily by the beta subunits. The protein is ATP synthase subunit beta of Bacillus cereus (strain B4264).